The chain runs to 576 residues: Beta-bisabolene synthase (576 aa).

5 residues coordinate (2E,6E)-farnesyl diphosphate: Arg-286, Asp-323, Asp-327, Arg-466, and Asn-469. 2 residues coordinate Mg(2+): Asp-323 and Asp-327. The short motif at 323–327 (DDVYD) is the DDXXD motif element. Asn-469, Thr-473, and Glu-477 together coordinate Mg(2+).

This sequence belongs to the terpene synthase family. Tpsb subfamily. Requires Mg(2+) as cofactor. Mn(2+) is required as a cofactor.

Its function is as follows. Produces almost exclusively beta-bisabolene and only traces of alpha-bisabolol from (2E,6E)-farnesyl diphosphate in fragrance biosynthesis. The chain is Beta-bisabolene synthase from Santalum austrocaledonicum (Sandalwood).